Consider the following 216-residue polypeptide: MTHVFTIAIDGPAGAGKGTLARRLADHYRLNLLDTGLTYRAVAYALIQHALPLDNVSAAETAARQVDMAKLDRAVLSAHAIGEAASKVAVYPTVRRILVEKQRAFARTPPGAVLDGRDIGTVVCPDADIKLYVTASAEVRAMRRLAEIESIGGTANFTEILADIVRRDERDMGRADSPLKPAADAHLLDTSEMAIEAAFLAAMAIVDDVLTRRNKA.

11–19 (GPAGAGKGT) provides a ligand contact to ATP.

It belongs to the cytidylate kinase family. Type 1 subfamily.

It is found in the cytoplasm. The enzyme catalyses CMP + ATP = CDP + ADP. The catalysed reaction is dCMP + ATP = dCDP + ADP. In Mesorhizobium japonicum (strain LMG 29417 / CECT 9101 / MAFF 303099) (Mesorhizobium loti (strain MAFF 303099)), this protein is Cytidylate kinase.